The primary structure comprises 290 residues: Glutamate 5-kinase (290 aa).

Lys-21 contributes to the ATP binding site. The substrate site is built by Ser-60, Asp-151, and Asn-163. 217 to 223 (TGGMFTK) contacts ATP.

This sequence belongs to the glutamate 5-kinase family.

It is found in the cytoplasm. It catalyses the reaction L-glutamate + ATP = L-glutamyl 5-phosphate + ADP. It functions in the pathway amino-acid biosynthesis; L-proline biosynthesis; L-glutamate 5-semialdehyde from L-glutamate: step 1/2. Catalyzes the transfer of a phosphate group to glutamate to form L-glutamate 5-phosphate. The sequence is that of Glutamate 5-kinase from Leptospira interrogans serogroup Icterohaemorrhagiae serovar copenhageni (strain Fiocruz L1-130).